A 166-amino-acid polypeptide reads, in one-letter code: Small ribosomal subunit protein uS5 (166 aa).

One can recognise an S5 DRBM domain in the interval 12–75 (YIEKLVQVNR…EAARRNMIQV (64 aa)).

The protein belongs to the universal ribosomal protein uS5 family. In terms of assembly, part of the 30S ribosomal subunit. Contacts proteins S4 and S8.

Its function is as follows. With S4 and S12 plays an important role in translational accuracy. Functionally, located at the back of the 30S subunit body where it stabilizes the conformation of the head with respect to the body. The polypeptide is Small ribosomal subunit protein uS5 (Pseudomonas fluorescens (strain SBW25)).